Consider the following 160-residue polypeptide: SsrA-binding protein (160 aa).

The protein belongs to the SmpB family.

The protein resides in the cytoplasm. Its function is as follows. Required for rescue of stalled ribosomes mediated by trans-translation. Binds to transfer-messenger RNA (tmRNA), required for stable association of tmRNA with ribosomes. tmRNA and SmpB together mimic tRNA shape, replacing the anticodon stem-loop with SmpB. tmRNA is encoded by the ssrA gene; the 2 termini fold to resemble tRNA(Ala) and it encodes a 'tag peptide', a short internal open reading frame. During trans-translation Ala-aminoacylated tmRNA acts like a tRNA, entering the A-site of stalled ribosomes, displacing the stalled mRNA. The ribosome then switches to translate the ORF on the tmRNA; the nascent peptide is terminated with the 'tag peptide' encoded by the tmRNA and targeted for degradation. The ribosome is freed to recommence translation, which seems to be the essential function of trans-translation. This chain is SsrA-binding protein, found in Salmonella agona (strain SL483).